Consider the following 730-residue polypeptide: Elongation factor 2 (730 aa).

The tr-type G domain occupies 19–260 (KFIRNIGIVA…MVVKHLPDPF (242 aa)). Residues 28–35 (AHIDHGKT), 94–98 (DTPGH), and 148–151 (NKVD) each bind GTP. His597 carries the post-translational modification Diphthamide.

Belongs to the TRAFAC class translation factor GTPase superfamily. Classic translation factor GTPase family. EF-G/EF-2 subfamily.

The protein resides in the cytoplasm. In terms of biological role, catalyzes the GTP-dependent ribosomal translocation step during translation elongation. During this step, the ribosome changes from the pre-translocational (PRE) to the post-translocational (POST) state as the newly formed A-site-bound peptidyl-tRNA and P-site-bound deacylated tRNA move to the P and E sites, respectively. Catalyzes the coordinated movement of the two tRNA molecules, the mRNA and conformational changes in the ribosome. The protein is Elongation factor 2 of Methanosphaerula palustris (strain ATCC BAA-1556 / DSM 19958 / E1-9c).